Consider the following 362-residue polypeptide: tRNA-specific 2-thiouridylase MnmA 1 (362 aa).

Residues 29–36 and M55 contribute to the ATP site; that span reads AMSGGVDS. C109 serves as the catalytic Nucleophile. C109 and C201 are disulfide-bonded. Position 133 (G133) interacts with ATP. The segment at 151-153 is interaction with tRNA; sequence KDQ. The active-site Cysteine persulfide intermediate is C201.

The protein belongs to the MnmA/TRMU family.

It is found in the cytoplasm. The catalysed reaction is S-sulfanyl-L-cysteinyl-[protein] + uridine(34) in tRNA + AH2 + ATP = 2-thiouridine(34) in tRNA + L-cysteinyl-[protein] + A + AMP + diphosphate + H(+). In terms of biological role, catalyzes the 2-thiolation of uridine at the wobble position (U34) of tRNA, leading to the formation of s(2)U34. The chain is tRNA-specific 2-thiouridylase MnmA 1 from Fusobacterium nucleatum subsp. nucleatum (strain ATCC 25586 / DSM 15643 / BCRC 10681 / CIP 101130 / JCM 8532 / KCTC 2640 / LMG 13131 / VPI 4355).